Here is a 121-residue protein sequence, read N- to C-terminus: Basic phospholipase A2 homolog blK-PLA2 (121 aa).

7 disulfides stabilise this stretch: cysteine 26–cysteine 115, cysteine 28–cysteine 44, cysteine 43–cysteine 95, cysteine 49–cysteine 121, cysteine 50–cysteine 88, cysteine 57–cysteine 81, and cysteine 75–cysteine 86. The interval 105-117 is important for membrane-damaging activities in eukaryotes and bacteria; heparin-binding; it reads KKYRYHLKPFCKK.

It belongs to the phospholipase A2 family. Group II subfamily. K49 sub-subfamily. In terms of assembly, homodimer; non-covalently linked. As to expression, expressed by the venom gland.

It is found in the secreted. Its function is as follows. Snake venom phospholipase A2 (PLA2) homolog that lacks enzymatic activity. Shows myotoxic and edema-inducing activities in vivo. A model of myotoxic mechanism has been proposed: an apo Lys49-PLA2 is activated by the entrance of a hydrophobic molecule (e.g. fatty acid) at the hydrophobic channel of the protein leading to a reorientation of a monomer. This reorientation causes a transition between 'inactive' to 'active' states, causing alignment of C-terminal and membrane-docking sites (MDoS) side-by-side and putting the membrane-disruption sites (MDiS) in the same plane, exposed to solvent and in a symmetric position for both monomers. The MDoS region stabilizes the toxin on membrane by the interaction of charged residues with phospholipid head groups. Subsequently, the MDiS region destabilizes the membrane with penetration of hydrophobic residues. This insertion causes a disorganization of the membrane, allowing an uncontrolled influx of ions (i.e. calcium and sodium), and eventually triggering irreversible intracellular alterations and cell death. This Bothrops leucurus (Whitetail lancehead) protein is Basic phospholipase A2 homolog blK-PLA2.